Here is a 171-residue protein sequence, read N- to C-terminus: MPLLDSFTVDHTRMEAPAVRVAKKMNTPHGDEITVFDLRFCVPNQEVMPERGIHTLEHLFAGFMRDHLNGNGVEIIDISPMGCRTGFYMSLIGTPDEQRVADAWKAAMADVLKVKDQNQIPELNVYQCGTYTMHSLEEAQDIARHIIERDVRINSNDELALPKEKLQELHI.

Fe cation-binding residues include His54, His58, and Cys128.

This sequence belongs to the LuxS family. In terms of assembly, homodimer. It depends on Fe cation as a cofactor.

The catalysed reaction is S-(5-deoxy-D-ribos-5-yl)-L-homocysteine = (S)-4,5-dihydroxypentane-2,3-dione + L-homocysteine. In terms of biological role, involved in the synthesis of autoinducer 2 (AI-2) which is secreted by bacteria and is used to communicate both the cell density and the metabolic potential of the environment. The regulation of gene expression in response to changes in cell density is called quorum sensing. Catalyzes the transformation of S-ribosylhomocysteine (RHC) to homocysteine (HC) and 4,5-dihydroxy-2,3-pentadione (DPD). This chain is S-ribosylhomocysteine lyase, found in Klebsiella pneumoniae (strain 342).